Here is a 517-residue protein sequence, read N- to C-terminus: Putative transporter C543.05c (517 aa).

Helical transmembrane passes span 68–88 (SFGV…FALL), 93–113 (LCIV…YDIM), 121–141 (FPFL…IAIA), 155–175 (CEIF…QVLC), 186–206 (FLSI…DTVG), 217–237 (ILLL…FQHI), 269–289 (IPVG…ILFY), 311–331 (GFHW…ILGI), 377–397 (SNFI…LLVL), 403–423 (CVLA…NGIT), and 449–471 (RVVW…ITQV).

It belongs to the anion exchanger (TC 2.A.31) family.

It is found in the vacuole membrane. This chain is Putative transporter C543.05c, found in Schizosaccharomyces pombe (strain 972 / ATCC 24843) (Fission yeast).